The chain runs to 311 residues: 3'(2'),5'-bisphosphate nucleotidase 1 (311 aa).

The Proton acceptor role is filled by Asp-49. 4 residues coordinate Mg(2+): Glu-72, Asp-116, Leu-118, and Asp-119. Thr-121 serves as the catalytic Proton acceptor. 4 residues coordinate AMP: Thr-202, His-205, Gly-227, and Lys-231. Residue Asp-254 coordinates Mg(2+).

Belongs to the inositol monophosphatase superfamily. Mg(2+) is required as a cofactor.

The enzyme catalyses adenosine 3',5'-bisphosphate + H2O = AMP + phosphate. It catalyses the reaction adenosine 2',5'-bisphosphate + H2O = AMP + phosphate. The catalysed reaction is 3'-phosphoadenylyl sulfate + H2O = adenosine 5'-phosphosulfate + phosphate. It carries out the reaction 1D-myo-inositol 1,4-bisphosphate + H2O = 1D-myo-inositol 4-phosphate + phosphate. The enzyme catalyses 1D-myo-inositol 1,3,4-trisphosphate + H2O = 1D-myo-inositol 3,4-bisphosphate + phosphate. Inhibited by Li(+) and Ca(2+), but not by Na(+). In terms of biological role, phosphatase that converts 3'(2')-phosphoadenosine 5'-phosphate (PAP) to AMP and adenosine 3'-phosphate 5'-phosphosulfate (PAPS) to adenosine 5'-phosphosulfate (APS). Is also able to hydrolyze inositol 1,4-bisphosphate (Ins(1,4)P2) and inositol 1,3,4-trisphosphate (Ins(1,3,4)P3), but is not active on AMP, 3'-AMP, fructose-1,6-bisphosphate, Ins(1)P, Ins(2)P and Ins(1,4,5)P3. Probably prevents the toxic accumulation of PAP, a compound which inhibits a variety of proteins, including PAPS-utilizing enzymes such as sulfotransferases, and RNA processing enzymes. Could also play a role in inositol recycling and phosphoinositide metabolism. In Dictyostelium discoideum (Social amoeba), this protein is 3'(2'),5'-bisphosphate nucleotidase 1 (bpnt1).